The primary structure comprises 480 residues: Nuclear receptor subfamily 6 group A member 1 (480 aa).

A disordered region spans residues M1–R32. The segment at residues Q57–E132 is a DNA-binding region (nuclear receptor). Zn(2+) contacts are provided by C60, C63, C77, C80, C96, C102, C112, and C115. NR C4-type zinc fingers lie at residues C60–C80 and C96–C120. Disordered stretches follow at residues R131–E150 and F162–S199. A compositionally biased stretch (basic and acidic residues) spans E165–H177. A sufficient for interaction with UIMC1 region spans residues H172 to L253. Over residues S187–S199 the composition is skewed to low complexity. In terms of domain architecture, NR LBD spans Q249–E480.

Belongs to the nuclear hormone receptor family. NR6 subfamily. Homodimer. Interacts with UIMC1. As to expression, shows highest expression in the germ cells of the adult testis.

It is found in the nucleus. Orphan nuclear receptor that binds to a response element containing the sequence 5'-TCAAGGTCA-3'. Acts as a regulator of embryonic stem cell pluripotency by mediating repression of POU5F1/OCT4: binds to the DR0 element within the POU5F1/OCT4 promoter and inhibits POU5F1/OCT4 expression during embryonic stem cell differentiation. Involved in the regulation of gene expression in germ cell development during gametogenesis. The chain is Nuclear receptor subfamily 6 group A member 1 (NR6A1) from Homo sapiens (Human).